The primary structure comprises 560 residues: Formate--tetrahydrofolate ligase (560 aa).

69–76 provides a ligand contact to ATP; it reads TPAGEGKS.

The protein belongs to the formate--tetrahydrofolate ligase family.

The enzyme catalyses (6S)-5,6,7,8-tetrahydrofolate + formate + ATP = (6R)-10-formyltetrahydrofolate + ADP + phosphate. It participates in one-carbon metabolism; tetrahydrofolate interconversion. This chain is Formate--tetrahydrofolate ligase, found in Listeria welshimeri serovar 6b (strain ATCC 35897 / DSM 20650 / CCUG 15529 / CIP 8149 / NCTC 11857 / SLCC 5334 / V8).